The sequence spans 303 residues: N-acetyl-D-glucosamine kinase (303 aa).

ATP contacts are provided by residues 4–11 (GFDIGGTK) and 133–140 (GVGGGLVL). Residues His-157, Cys-177, Cys-179, and Cys-184 each coordinate Zn(2+).

Belongs to the ROK (NagC/XylR) family. NagK subfamily.

It catalyses the reaction N-acetyl-D-glucosamine + ATP = N-acetyl-D-glucosamine 6-phosphate + ADP + H(+). The protein operates within cell wall biogenesis; peptidoglycan recycling. Catalyzes the phosphorylation of N-acetyl-D-glucosamine (GlcNAc) derived from cell-wall degradation, yielding GlcNAc-6-P. In Salmonella arizonae (strain ATCC BAA-731 / CDC346-86 / RSK2980), this protein is N-acetyl-D-glucosamine kinase.